We begin with the raw amino-acid sequence, 207 residues long: Large ribosomal subunit protein bL17m (207 aa).

Residues 173-200 (EKESEHARLKEDHEDEKTVKKDWKRGDP) show a composition bias toward basic and acidic residues. Positions 173–207 (EKESEHARLKEDHEDEKTVKKDWKRGDPIPRPTYI) are disordered.

Belongs to the bacterial ribosomal protein bL17 family. In terms of assembly, component of the mitochondrial large ribosomal subunit (mt-LSU). Mature yeast 74S mitochondrial ribosomes consist of a small (37S) and a large (54S) subunit. The 37S small subunit contains a 15S ribosomal RNA (15S mt-rRNA) and at least 32 different proteins. The 54S large subunit contains a 21S rRNA (21S mt-rRNA) and at least 45 different proteins.

The protein resides in the mitochondrion. Its function is as follows. Component of the mitochondrial ribosome (mitoribosome), a dedicated translation machinery responsible for the synthesis of mitochondrial genome-encoded proteins, including at least some of the essential transmembrane subunits of the mitochondrial respiratory chain. The mitoribosomes are attached to the mitochondrial inner membrane and translation products are cotranslationally integrated into the membrane. The chain is Large ribosomal subunit protein bL17m (mrpl8) from Schizosaccharomyces pombe (strain 972 / ATCC 24843) (Fission yeast).